The chain runs to 187 residues: Large ribosomal subunit protein bL32m (187 aa).

Zn(2+) contacts are provided by Cys109, Cys112, Cys122, and Cys125.

This sequence belongs to the bacterial ribosomal protein bL32 family. Component of the mitochondrial ribosome large subunit (39S) which comprises a 16S rRNA and about 50 distinct proteins. In terms of processing, MRPL32 precursor is processed by the m-AAA protease (composed of AFG3L2 and SPG7), which cleaves the N-terminal transit peptide. Cleavage by the m-AAA protease takes place prior to assembly into the large subunit, an essential step for mitochondrial ribosome (mitoribosome) assembly. Proper processing by the m-AAA protease is dependent on the zinc-binding region within the tightly folded C-terminal domain of MRPL32: zinc-dependent folding halts degradation initiated from the N-terminus and triggers the release of mature MRPL32.

The protein localises to the mitochondrion. Its function is as follows. Component of the mitochondrial large ribosomal subunit (mt-LSU). The mitochondrial ribosome (mitoribosome) is a large ribonucleoprotein complex responsible for the synthesis of proteins inside mitochondria. The protein is Large ribosomal subunit protein bL32m (Mrpl32) of Mus musculus (Mouse).